An 858-amino-acid chain; its full sequence is NEDD4-binding protein 1 (858 aa).

Residues 17 to 37 (TCTEPPGGRQSPTASRAQPDS) are disordered. Polar residues predominate over residues 26-37 (QSPTASRAQPDS). A KH-like domain is found at 96–180 (KEDVYKAKEY…VQQFVALFQE (85 aa)). 2 disordered regions span residues 262 to 321 (EDKT…TWTV) and 388 to 424 (QKTQ…KEKE). Residues 285 to 316 (RSSESEQRDTKRQYSLERREEEQCEEREREPT) show a composition bias toward basic and acidic residues. Positions 389–418 (KTQSTQGAQRTSRTPDPSPCANASSTSTSN) are enriched in polar residues. The 153-residue stretch at 598–750 (LRHIIIDGSN…LGKHGPHLDE (153 aa)) folds into the RNase NYN domain. Residues 774–784 (SVYSQAAQSTA) show a composition bias toward polar residues. Residues 774–823 (SVYSQAAQSTAHPSSPSHWPHSGPPDWHLPRPSPSPPPQRSPSETTELKR) form a disordered region. Low complexity predominate over residues 785–799 (HPSSPSHWPHSGPPD). The span at 804–813 (RPSPSPPPQR) shows a compositional bias: pro residues. Positions 813-858 (RSPSETTELKRKLYDIFPDQKQRIDRILSDNPYMRDLNALSGLLLG) are coCUN.

Belongs to the N4BP1 family.

The protein resides in the nucleus. It localises to the nucleolus. The protein localises to the PML body. Functionally, potent suppressor of cytokine production that acts as a regulator of innate immune signaling and inflammation. Acts as a key negative regulator of select cytokine and chemokine responses elicited by TRIF-independent Toll-like receptors (TLRs), thereby limiting inflammatory cytokine responses to minor insults. Has ribonuclease activity. The sequence is that of NEDD4-binding protein 1 from Danio rerio (Zebrafish).